A 64-amino-acid polypeptide reads, in one-letter code: Small ribosomal subunit protein bS21 (64 aa).

The protein belongs to the bacterial ribosomal protein bS21 family.

In Sulfurihydrogenibium sp. (strain YO3AOP1), this protein is Small ribosomal subunit protein bS21.